We begin with the raw amino-acid sequence, 232 residues long: Phosphoribosylformylglycinamidine synthase subunit PurQ (232 aa).

A Glutamine amidotransferase type-1 domain is found at 2–232 (KIAIIQFGGT…SMADYITENF (231 aa)). Cys86 functions as the Nucleophile in the catalytic mechanism. Active-site residues include His203 and Glu205.

In terms of assembly, part of the FGAM synthase complex composed of 1 PurL, 1 PurQ and 2 PurS subunits.

It localises to the cytoplasm. It carries out the reaction N(2)-formyl-N(1)-(5-phospho-beta-D-ribosyl)glycinamide + L-glutamine + ATP + H2O = 2-formamido-N(1)-(5-O-phospho-beta-D-ribosyl)acetamidine + L-glutamate + ADP + phosphate + H(+). It catalyses the reaction L-glutamine + H2O = L-glutamate + NH4(+). It functions in the pathway purine metabolism; IMP biosynthesis via de novo pathway; 5-amino-1-(5-phospho-D-ribosyl)imidazole from N(2)-formyl-N(1)-(5-phospho-D-ribosyl)glycinamide: step 1/2. Part of the phosphoribosylformylglycinamidine synthase complex involved in the purines biosynthetic pathway. Catalyzes the ATP-dependent conversion of formylglycinamide ribonucleotide (FGAR) and glutamine to yield formylglycinamidine ribonucleotide (FGAM) and glutamate. The FGAM synthase complex is composed of three subunits. PurQ produces an ammonia molecule by converting glutamine to glutamate. PurL transfers the ammonia molecule to FGAR to form FGAM in an ATP-dependent manner. PurS interacts with PurQ and PurL and is thought to assist in the transfer of the ammonia molecule from PurQ to PurL. The chain is Phosphoribosylformylglycinamidine synthase subunit PurQ from Methanosarcina mazei (strain ATCC BAA-159 / DSM 3647 / Goe1 / Go1 / JCM 11833 / OCM 88) (Methanosarcina frisia).